The primary structure comprises 191 residues: Small ribosomal subunit protein uS9c (191 aa).

The disordered stretch occupies residues 166-191 (TQDSRVKERRKYGLKKARKASQYHKR). Residues 172–191 (KERRKYGLKKARKASQYHKR) show a composition bias toward basic residues.

It belongs to the universal ribosomal protein uS9 family.

The protein localises to the plastid. It is found in the chloroplast. The chain is Small ribosomal subunit protein uS9c (rps9) from Chlamydomonas reinhardtii (Chlamydomonas smithii).